The primary structure comprises 98 residues: Co-chaperonin GroES (98 aa).

Belongs to the GroES chaperonin family. In terms of assembly, heptamer of 7 subunits arranged in a ring. Interacts with the chaperonin GroEL.

It localises to the cytoplasm. Together with the chaperonin GroEL, plays an essential role in assisting protein folding. The GroEL-GroES system forms a nano-cage that allows encapsulation of the non-native substrate proteins and provides a physical environment optimized to promote and accelerate protein folding. GroES binds to the apical surface of the GroEL ring, thereby capping the opening of the GroEL channel. This Coprothermobacter proteolyticus (strain ATCC 35245 / DSM 5265 / OCM 4 / BT) protein is Co-chaperonin GroES.